A 254-amino-acid chain; its full sequence is Trypsin (254 aa).

The first 16 residues, 1-16 (MLRFIAVFALVNCALA), serve as a signal peptide directing secretion. Positions 17–26 (GTLPNDLDGR) are cleaved as a propeptide — activation peptide. One can recognise a Peptidase S1 domain in the interval 27–252 (IVNGVDTTIE…VRSWIEKTAK (226 aa)). Cys53 and Cys69 form a disulfide bridge. Active-site charge relay system residues include His68 and Asp113. 3 disulfide bridges follow: Cys154–Cys158, Cys178–Cys195, and Cys204–Cys228. Residue Ser208 is the Charge relay system of the active site.

Belongs to the peptidase S1 family.

It localises to the secreted. The protein resides in the extracellular space. It carries out the reaction Preferential cleavage: Arg-|-Xaa, Lys-|-Xaa.. Functionally, involved in digestion of a protein meal. The sequence is that of Trypsin from Sarcophaga bullata (Grey flesh fly).